We begin with the raw amino-acid sequence, 427 residues long: Cysteate synthase (427 aa).

Lys-104 bears the N6-(pyridoxal phosphate)lysine mark. 2 residues coordinate pyridoxal 5'-phosphate: Asn-130 and Thr-382.

It belongs to the threonine synthase family. Cysteate synthase subfamily. As to quaternary structure, homotrimer. Pyridoxal 5'-phosphate serves as cofactor.

It catalyses the reaction O-phospho-L-serine + sulfite + H(+) = L-cysteate + phosphate. The protein operates within cofactor biosynthesis; coenzyme M biosynthesis. In terms of biological role, specifically catalyzes the beta-elimination of phosphate from L-phosphoserine and the beta-addition of sulfite to the dehydroalanine intermediate to produce L-cysteate. The sequence is that of Cysteate synthase from Methanocella paludicola (strain DSM 17711 / JCM 13418 / NBRC 101707 / SANAE).